The following is a 588-amino-acid chain: ATP-dependent lipid A-core flippase (588 aa).

6 helical membrane-spanning segments follow: residues 23 to 43, 56 to 76, 141 to 161, 162 to 182, 257 to 277, and 278 to 298; these read FWPV…IDAG, FITI…IGIT, DALT…TVMM, VICW…GIIV, LVIA…STVI, and TISA…IKPM. In terms of domain architecture, ABC transmembrane type-1 spans 28-310; the sequence is LLGVLANILY…LTTLNATIQR (283 aa). One can recognise an ABC transporter domain in the interval 342–576; sequence IEFKHVYHAY…DGHYAQLYKV (235 aa). An ATP-binding site is contributed by 375–382; the sequence is GHSGSGKT.

The protein belongs to the ABC transporter superfamily. Lipid exporter (TC 3.A.1.106) family. In terms of assembly, homodimer.

Its subcellular location is the cell inner membrane. It catalyses the reaction ATP + H2O + lipid A-core oligosaccharideSide 1 = ADP + phosphate + lipid A-core oligosaccharideSide 2.. In terms of biological role, involved in lipopolysaccharide (LPS) biosynthesis. Translocates lipid A-core from the inner to the outer leaflet of the inner membrane. Transmembrane domains (TMD) form a pore in the inner membrane and the ATP-binding domain (NBD) is responsible for energy generation. The protein is ATP-dependent lipid A-core flippase of Legionella pneumophila (strain Paris).